A 153-amino-acid polypeptide reads, in one-letter code: Antibacterial peptide PMAP-23 (153 aa).

Positions 1-29 (METQRASLCLGRWSLWLLLLGLVVPSASA) are cleaved as a signal peptide. Residue Gln30 is modified to Pyrrolidone carboxylic acid. Residues 30–130 (QALSYREAVL…DITCNQLQSV (101 aa)) constitute a propeptide that is removed on maturation. A disordered region spans residues 61–80 (DQPPKADEDPGTPKPVSFTV). Intrachain disulfides connect Cys85-Cys96 and Cys107-Cys124.

Belongs to the cathelicidin family.

The protein localises to the secreted. In terms of biological role, exerts antimicrobial activity against both Gram-positive and negative bacteria at concentrations of 2-16 micro molar. Its activity appears to be mediated by its ability to damage bacterial membranes. In Sus scrofa (Pig), this protein is Antibacterial peptide PMAP-23 (PMAP23).